The chain runs to 69 residues: Large ribosomal subunit protein uL29 (69 aa).

Belongs to the universal ribosomal protein uL29 family.

This Synechococcus sp. (strain CC9902) protein is Large ribosomal subunit protein uL29.